A 321-amino-acid polypeptide reads, in one-letter code: MISWLPSVAMGSRLLCCVALCLLGAGPADSGLTQTPRHLVKARGQQVTLSCFPISGHLSLYWYQQAVGQGPQLLIQYYNREERGKGNFPERFSAQQFPDSHSELNMTSLELTDSALYLCASSPNEDSEYGETLYFGEGSRLTVVEDLKKVSPPKVTVFEPSEAEISRTLKATLVCLATGFYPDHVELSWWVNGKEVRDGVSTDPEPYKEQSGANVSSYCLSSRLRVSATFWHNPRNHFRCQVQFHGLGKDDQWDYPEAKPVTQNVSADTWGRADCGFTSASYQQGVLSATILYEILLGKATLYAILVSVLALMAKVKRKDS.

The signal sequence occupies residues 1–28; that stretch reads MISWLPSVAMGSRLLCCVALCLLGAGPA. The interval 29–122 is v segment; it reads DSGLTQTPRH…DSALYLCASS (94 aa). Asparagine 105 carries N-linked (GlcNAc...) asparagine; by host glycosylation. The tract at residues 123-128 is d segment; the sequence is PNEDSE. Positions 129–144 are j segment; sequence YGETLYFGEGSRLTVV. A c region region spans residues 145–321; that stretch reads EDLKKVSPPK…LMAKVKRKDS (177 aa). 2 N-linked (GlcNAc...) asparagine; by host glycosylation sites follow: asparagine 214 and asparagine 264.

This Feline leukemia virus protein is Viral T-cell receptor beta chain-like T17T-22 (V-TCR).